The chain runs to 84 residues: UPF0386 protein Oant_1614 (84 aa).

Belongs to the UPF0386 family.

This is UPF0386 protein Oant_1614 from Brucella anthropi (strain ATCC 49188 / DSM 6882 / CCUG 24695 / JCM 21032 / LMG 3331 / NBRC 15819 / NCTC 12168 / Alc 37) (Ochrobactrum anthropi).